Reading from the N-terminus, the 705-residue chain is MQPTATMATAATTTTTTTATVALTTSWDNATGRPTAEPDPILDNYVLLVVVMSLFVGGTLVVLSGVLLLCKRCWDVHQRLNRAMEEAEKTTTTYLDNGTHPAQDPDFRGEDPECQDAETERFLSTSSTGRRVSFNEAALFEQSRKTQDKGRRYTLTEGDFHHLKNARLTHLHLPPLKIVTIHECDSGEASSATTPHPATSPKATLAIFQPPGKALTGRSVGPSSALPGDPYNSAAGATDFAEISPSASSDSGEGTSLDAGTRSTKAGGPGAAAGPGEAGPGSGAGTVLQFLTRLRRHASLDGASPYFKVKKWKLEPSQRAASLDTRGSPKRHHFQRQRAASESTEQEEGDAPQEDFIQYIARAGDAVAFPHPRPFLASPPPALGRLEAAEAAGGASPDSPPERGAGSAGPEQQQPPLEPDAERDAGPEQAQTSYRDLWSLRASLELHAAASDHSSSGNDRDSVRSGDSSGSGSGGAAPAFPPPSPPAPRPKDGEARRLLQMDSGYASIEGRGAGDDTEPPAAPARPRSPRAWPRRPRRDYSIDEKTDALFHEFLRHDPHFDDTPAAARHRARAHPHARKQWQRGRQHSDPGARAAPALAGTPAPPAGAARPARAPLRRGDSVDGPPDGRTLGGAGDDPAIPVIEEEPGGGGCPGSGLCVLPSGSVLDKLAAGLDERLFPPRLAEPVVATPALVAAAPTSPDHSPA.

Residues 1 to 45 (MQPTATMATAATTTTTTTATVALTTSWDNATGRPTAEPDPILDNY) are Extracellular-facing. The N-linked (GlcNAc...) asparagine glycan is linked to Asn29. Residues 46-66 (VLLVVVMSLFVGGTLVVLSGV) form a helical; Signal-anchor for type III membrane protein membrane-spanning segment. Residues 67–705 (LLLCKRCWDV…APTSPDHSPA (639 aa)) are Cytoplasmic-facing. 2 disordered regions span residues 91-113 (TTTYLDNGTHPAQDPDFRGEDPE) and 212-284 (GKAL…GSGA). Over residues 245 to 254 (PSASSDSGEG) the composition is skewed to polar residues. Positions 267–284 (GGPGAAAGPGEAGPGSGA) are enriched in gly residues. Phosphoserine is present on residues Ser299 and Ser304. 4 disordered regions span residues 316–353 (PSQRAASLDTRGSPKRHHFQRQRAASESTEQEEGDAPQ), 369–436 (FPHP…SYRD), 448–540 (AAAS…RRDY), and 559–655 (HFDD…CPGS). Residues 344–353 (TEQEEGDAPQ) show a composition bias toward acidic residues. Residues 371–382 (HPRPFLASPPPA) show a composition bias toward pro residues. The span at 383–397 (LGRLEAAEAAGGASP) shows a compositional bias: low complexity. Positions 479–488 (AFPPPSPPAP) are enriched in pro residues. A compositionally biased stretch (basic and acidic residues) spans 489–499 (RPKDGEARRLL). Residues Ser507 and Ser528 each carry the phosphoserine modification. Over residues 567–585 (ARHRARAHPHARKQWQRGR) the composition is skewed to basic residues. The span at 591-614 (GARAAPALAGTPAPPAGAARPARA) shows a compositional bias: low complexity. The residue at position 621 (Ser621) is a Phosphoserine. Position 698 is a phosphothreonine (Thr698). Phosphoserine is present on residues Ser699 and Ser703.

As to quaternary structure, interacts with voltage-dependent calcium channels CACNB1, CACNB2, CACNB3 and CACNB4 beta subunits; prevents their interaction with the CACNA1C alpha subunit thereby negatively regulating the activity of the corresponding calcium channels.

The protein resides in the cytoplasmic vesicle. It is found in the secretory vesicle. The protein localises to the synaptic vesicle membrane. It localises to the cell membrane. Its subcellular location is the cell projection. The protein resides in the growth cone. In terms of biological role, negatively regulates voltage-gated calcium channels by preventing the interaction between their alpha and beta subunits. Thereby, negatively regulates calcium channels activity at the plasma membrane and indirectly inhibits calcium-regulated exocytosis. This is Voltage-dependent calcium channel beta subunit-associated regulatory protein from Homo sapiens (Human).